A 1000-amino-acid polypeptide reads, in one-letter code: Receptor-type tyrosine-protein kinase FLT3 (1000 aa).

A signal peptide spans 1 to 27 (MRALAQRSDRRLLLLVVLSVMILETVT). Over 28–544 (NQDLPVIKCV…PFPFIQDNIS (517 aa)) the chain is Extracellular. 2 disulfide bridges follow: Cys-36–Cys-66 and Cys-104–Cys-115. Asn-44 is a glycosylation site (N-linked (GlcNAc...) asparagine). The interval 45–67 (GSSAGKPSSYRMVRGSPEDLQCT) is disordered. N-linked (GlcNAc...) asparagine glycosylation is found at Asn-133 and Asn-152. 2 disulfides stabilise this stretch: Cys-200–Cys-207 and Cys-273–Cys-331. Residues 254–344 (PQSTLPQLFL…KHPSQSALVT (91 aa)) form the Ig-like C2-type domain. Residues Asn-307, Asn-324, and Asn-352 are each glycosylated (N-linked (GlcNAc...) asparagine). 2 disulfides stabilise this stretch: Cys-369–Cys-408 and Cys-382–Cys-393. N-linked (GlcNAc...) asparagine glycosylation is found at Asn-445, Asn-474, Asn-503, and Asn-542. Residues 545-564 (FYATIGLCLPFIVVLIVLIC) form a helical membrane-spanning segment. Topologically, residues 565–992 (HKYKKQFRYE…GSEPPSPQAQ (428 aa)) are cytoplasmic. Tyr-573 bears the Phosphotyrosine mark. The residue at position 575 (Ser-575) is a Phosphoserine. 2 positions are modified to phosphotyrosine; by autocatalysis: Tyr-590 and Tyr-592. Residues 592–598 (YVDFRDY) are important for normal regulation of the kinase activity and for maintaining the kinase in an inactive state in the absence of ligand binding. A Phosphotyrosine modification is found at Tyr-600. Positions 611–946 (LEFGKVLGSG…PSFPNLTSFL (336 aa)) constitute a Protein kinase domain. Residues 617–625 (LGSGAFGRV) and Lys-645 each bind ATP. The residue at position 727 (Tyr-727) is a Phosphotyrosine; by autocatalysis. Residue Ser-760 is modified to Phosphoserine. A phosphotyrosine mark is found at Tyr-769 and Tyr-796. Asp-814 (proton acceptor) is an active-site residue. Tyr-845 carries the phosphotyrosine; by autocatalysis modification. Tyr-958 and Tyr-972 each carry phosphotyrosine. The disordered stretch occupies residues 968–1000 (HPSIYQNRRPLSREAGSEPPSPQAQVKIHRERS). Ser-1000 bears the Phosphoserine mark.

It belongs to the protein kinase superfamily. Tyr protein kinase family. CSF-1/PDGF receptor subfamily. As to quaternary structure, monomer in the absence of bound FLT3LG. Homodimer in the presence of bound FLT3LG. Interacts with FIZ1 following ligand activation. Interacts with FES, FER, LYN, FGR, HCK, SRC and GRB2. Interacts with PTPRJ/DEP-1 and PTPN11/SHP2. Interacts with RNF115 and RNF126. In terms of processing, N-glycosylated, contains complex N-glycans with sialic acid. Post-translationally, autophosphorylated on several tyrosine residues in response to FLT3LG binding. FLT3LG binding also increases phosphorylation of mutant kinases that are constitutively activated. Dephosphorylated by PTPRJ/DEP-1, PTPN1, PTPN6/SHP-1, and to a lesser degree by PTPN12. Dephosphorylation is important for export from the endoplasmic reticulum and location at the cell membrane. Rapidly ubiquitinated by UBE2L6 and the E3 ubiquitin-protein ligase SIAH1 after autophosphorylation, leading to its proteasomal degradation. In terms of tissue distribution, hematopoietic stem and progenitor cell-enriched populations. Found in brain, placenta and testis.

It is found in the membrane. The protein resides in the endoplasmic reticulum lumen. It catalyses the reaction L-tyrosyl-[protein] + ATP = O-phospho-L-tyrosyl-[protein] + ADP + H(+). With respect to regulation, present in an inactive conformation in the absence of bound ligand. FLT3LG binding leads to dimerization and activation by autophosphorylation. Functionally, tyrosine-protein kinase that acts as a cell-surface receptor for the cytokine FLT3LG and regulates differentiation, proliferation and survival of hematopoietic progenitor cells and of dendritic cells. Promotes phosphorylation of SHC1 and AKT1, and activation of the downstream effector MTOR. Promotes activation of RAS signaling and phosphorylation of downstream kinases, including MAPK1/ERK2 and/or MAPK3/ERK1. Promotes phosphorylation of FES, FER, PTPN6/SHP, PTPN11/SHP-2, PLCG1, and STAT5A and/or STAT5B. Activation of wild-type FLT3 causes only marginal activation of STAT5A or STAT5B. Mutations that cause constitutive kinase activity promote cell proliferation and resistance to apoptosis via the activation of multiple signaling pathways. The protein is Receptor-type tyrosine-protein kinase FLT3 (Flt3) of Mus musculus (Mouse).